The sequence spans 311 residues: N-acetylmuramic acid 6-phosphate etherase (311 aa).

The 164-residue stretch at 66–229 (VAVRMARGGR…STITMIRLGK (164 aa)) folds into the SIS domain. The Proton donor role is filled by Glu-94. Residue Glu-125 is part of the active site.

This sequence belongs to the GCKR-like family. MurNAc-6-P etherase subfamily. In terms of assembly, homodimer.

It carries out the reaction N-acetyl-D-muramate 6-phosphate + H2O = N-acetyl-D-glucosamine 6-phosphate + (R)-lactate. It functions in the pathway amino-sugar metabolism; N-acetylmuramate degradation. In terms of biological role, specifically catalyzes the cleavage of the D-lactyl ether substituent of MurNAc 6-phosphate, producing GlcNAc 6-phosphate and D-lactate. This chain is N-acetylmuramic acid 6-phosphate etherase, found in Streptomyces coelicolor (strain ATCC BAA-471 / A3(2) / M145).